A 577-amino-acid chain; its full sequence is Arginine--tRNA ligase (577 aa).

Positions 122-132 match the 'HIGH' region motif; that stretch reads PNVAKEMHVGH.

Belongs to the class-I aminoacyl-tRNA synthetase family. As to quaternary structure, monomer.

The protein localises to the cytoplasm. The catalysed reaction is tRNA(Arg) + L-arginine + ATP = L-arginyl-tRNA(Arg) + AMP + diphosphate. This chain is Arginine--tRNA ligase, found in Escherichia coli O9:H4 (strain HS).